The following is a 549-amino-acid chain: Cytoplasmic trehalase (549 aa).

Substrate is bound by residues R168, 175 to 176 (WD), N212, 221 to 223 (RSQ), 292 to 294 (RDE), and G324. Residues D326 and E509 each act as proton donor/acceptor in the active site. Substrate is bound at residue E525.

It belongs to the glycosyl hydrolase 37 family. Monomer.

It is found in the cytoplasm. It carries out the reaction alpha,alpha-trehalose + H2O = alpha-D-glucose + beta-D-glucose. It participates in glycan degradation; trehalose degradation; D-glucose from alpha,alpha-trehalose: step 1/1. Hydrolyzes trehalose to glucose. Could be involved, in cells returning to low osmolarity conditions, in the utilization of the accumulated cytoplasmic trehalose, which was synthesized in response to high osmolarity. This chain is Cytoplasmic trehalase, found in Escherichia coli O139:H28 (strain E24377A / ETEC).